A 189-amino-acid chain; its full sequence is Elongation factor P (189 aa).

At Lys-34 the chain carries N6-(3,6-diaminohexanoyl)-5-hydroxylysine.

The protein belongs to the elongation factor P family. May be beta-lysylated on the epsilon-amino group of Lys-34 by the combined action of EpmA and EpmB, and then hydroxylated on the C5 position of the same residue by EpmC (if this protein is present). Lysylation is critical for the stimulatory effect of EF-P on peptide-bond formation. The lysylation moiety may extend toward the peptidyltransferase center and stabilize the terminal 3-CCA end of the tRNA. Hydroxylation of the C5 position on Lys-34 may allow additional potential stabilizing hydrogen-bond interactions with the P-tRNA.

The protein localises to the cytoplasm. It participates in protein biosynthesis; polypeptide chain elongation. Involved in peptide bond synthesis. Alleviates ribosome stalling that occurs when 3 or more consecutive Pro residues or the sequence PPG is present in a protein, possibly by augmenting the peptidyl transferase activity of the ribosome. Modification of Lys-34 is required for alleviation. The chain is Elongation factor P from Francisella philomiragia subsp. philomiragia (strain ATCC 25017 / CCUG 19701 / FSC 153 / O#319-036).